The sequence spans 158 residues: 6,7-dimethyl-8-ribityllumazine synthase (158 aa).

5-amino-6-(D-ribitylamino)uracil is bound by residues Phe-22, 57–59 (AYE), and 84–86 (TVI). 89–90 (GT) is a binding site for (2S)-2-hydroxy-3-oxobutyl phosphate. His-92 (proton donor) is an active-site residue. Phe-117 provides a ligand contact to 5-amino-6-(D-ribitylamino)uracil. Arg-131 is a binding site for (2S)-2-hydroxy-3-oxobutyl phosphate.

It belongs to the DMRL synthase family. Forms an icosahedral capsid composed of 60 subunits, arranged as a dodecamer of pentamers.

The catalysed reaction is (2S)-2-hydroxy-3-oxobutyl phosphate + 5-amino-6-(D-ribitylamino)uracil = 6,7-dimethyl-8-(1-D-ribityl)lumazine + phosphate + 2 H2O + H(+). It functions in the pathway cofactor biosynthesis; riboflavin biosynthesis; riboflavin from 2-hydroxy-3-oxobutyl phosphate and 5-amino-6-(D-ribitylamino)uracil: step 1/2. Its function is as follows. Catalyzes the formation of 6,7-dimethyl-8-ribityllumazine by condensation of 5-amino-6-(D-ribitylamino)uracil with 3,4-dihydroxy-2-butanone 4-phosphate. This is the penultimate step in the biosynthesis of riboflavin. In Pectobacterium carotovorum subsp. carotovorum (strain PC1), this protein is 6,7-dimethyl-8-ribityllumazine synthase.